We begin with the raw amino-acid sequence, 325 residues long: Phosphatidylserine decarboxylase proenzyme (325 aa).

Active-site charge relay system; for autoendoproteolytic cleavage activity residues include D90, H147, and S253. S253 serves as the catalytic Schiff-base intermediate with substrate; via pyruvic acid; for decarboxylase activity. At S253 the chain carries Pyruvic acid (Ser); by autocatalysis. The interval 281–325 (MASKMSSQKAITPEQTTETPVQASNEFDDNAGETKKDTPSEGADS) is disordered. The segment covering 284–305 (KMSSQKAITPEQTTETPVQASN) has biased composition (polar residues).

The protein belongs to the phosphatidylserine decarboxylase family. PSD-B subfamily. Prokaryotic type I sub-subfamily. As to quaternary structure, heterodimer of a large membrane-associated beta subunit and a small pyruvoyl-containing alpha subunit. Pyruvate is required as a cofactor. In terms of processing, is synthesized initially as an inactive proenzyme. Formation of the active enzyme involves a self-maturation process in which the active site pyruvoyl group is generated from an internal serine residue via an autocatalytic post-translational modification. Two non-identical subunits are generated from the proenzyme in this reaction, and the pyruvate is formed at the N-terminus of the alpha chain, which is derived from the carboxyl end of the proenzyme. The autoendoproteolytic cleavage occurs by a canonical serine protease mechanism, in which the side chain hydroxyl group of the serine supplies its oxygen atom to form the C-terminus of the beta chain, while the remainder of the serine residue undergoes an oxidative deamination to produce ammonia and the pyruvoyl prosthetic group on the alpha chain. During this reaction, the Ser that is part of the protease active site of the proenzyme becomes the pyruvoyl prosthetic group, which constitutes an essential element of the active site of the mature decarboxylase.

It localises to the cell membrane. It catalyses the reaction a 1,2-diacyl-sn-glycero-3-phospho-L-serine + H(+) = a 1,2-diacyl-sn-glycero-3-phosphoethanolamine + CO2. The protein operates within phospholipid metabolism; phosphatidylethanolamine biosynthesis; phosphatidylethanolamine from CDP-diacylglycerol: step 2/2. Catalyzes the formation of phosphatidylethanolamine (PtdEtn) from phosphatidylserine (PtdSer). The chain is Phosphatidylserine decarboxylase proenzyme from Alteromonas mediterranea (strain DSM 17117 / CIP 110805 / LMG 28347 / Deep ecotype).